Reading from the N-terminus, the 212-residue chain is Secreted and transmembrane protein 1b (212 aa).

The signal sequence occupies residues 1–28 (MLAYSVTSSGLFPRMLWALLLLAASLNA). The Extracellular portion of the chain corresponds to 29–160 (HNDVWDEPCC…DKPPTAVRTE (132 aa)). A disulfide bridge links Cys38 with Cys55. Residues Asn56, Asn85, Asn114, and Asn130 are each glycosylated (N-linked (GlcNAc...) asparagine). A helical membrane pass occupies residues 161-181 (VIIIIAIATTIIITGIGVFVW). The Cytoplasmic portion of the chain corresponds to 182-212 (YKQFPVAPQIQMSVPCLIHGSPGIPYLTLPP).

It belongs to the SECTM family. In terms of assembly, interacts with CD7.

The protein localises to the cell membrane. The protein resides in the secreted. Its function is as follows. May be involved in thymocyte signaling. The sequence is that of Secreted and transmembrane protein 1b (Sectm1b) from Mus musculus (Mouse).